The primary structure comprises 303 residues: Pyridoxal 5'-phosphate synthase subunit PdxS (303 aa).

Asp-33 contacts D-ribose 5-phosphate. Lys-90 functions as the Schiff-base intermediate with D-ribose 5-phosphate in the catalytic mechanism. Gly-162 is a binding site for D-ribose 5-phosphate. Arg-174 contributes to the D-glyceraldehyde 3-phosphate binding site. Residues Gly-223 and Gly-244–Ser-245 each bind D-ribose 5-phosphate.

Belongs to the PdxS/SNZ family. In the presence of PdxT, forms a dodecamer of heterodimers.

The enzyme catalyses aldehydo-D-ribose 5-phosphate + D-glyceraldehyde 3-phosphate + L-glutamine = pyridoxal 5'-phosphate + L-glutamate + phosphate + 3 H2O + H(+). It functions in the pathway cofactor biosynthesis; pyridoxal 5'-phosphate biosynthesis. In terms of biological role, catalyzes the formation of pyridoxal 5'-phosphate from ribose 5-phosphate (RBP), glyceraldehyde 3-phosphate (G3P) and ammonia. The ammonia is provided by the PdxT subunit. Can also use ribulose 5-phosphate and dihydroxyacetone phosphate as substrates, resulting from enzyme-catalyzed isomerization of RBP and G3P, respectively. This is Pyridoxal 5'-phosphate synthase subunit PdxS from Mycobacterium avium (strain 104).